The following is a 130-amino-acid chain: Gonadotropin subunit beta-1 (130 aa).

A signal peptide spans 1–18 (MRMHFVVMVMLLPALMMA). Intrachain disulfides connect C26/C74, C40/C89, C51/C105, C55/C107, and C110/C117. Residue N30 is glycosylated (N-linked (GlcNAc...) asparagine).

This sequence belongs to the glycoprotein hormones subunit beta family. As to quaternary structure, heterodimer of an alpha and a beta chain.

The protein resides in the secreted. Its function is as follows. Involved in gametogenesis and steroidogenesis. The polypeptide is Gonadotropin subunit beta-1 (cgba) (Cyprinus carpio (Common carp)).